We begin with the raw amino-acid sequence, 209 residues long: Putative BTB/POZ domain-containing protein At2g40450 (209 aa).

The BTB domain maps to 24–98 (ADVRLKAGDS…IYRVDGSICS (75 aa)).

Its pathway is protein modification; protein ubiquitination. Its function is as follows. May act as a substrate-specific adapter of an E3 ubiquitin-protein ligase complex (CUL3-RBX1-BTB) which mediates the ubiquitination and subsequent proteasomal degradation of target proteins. This Arabidopsis thaliana (Mouse-ear cress) protein is Putative BTB/POZ domain-containing protein At2g40450.